The primary structure comprises 525 residues: GMP synthase [glutamine-hydrolyzing] (525 aa).

Residues 9–207 form the Glutamine amidotransferase type-1 domain; that stretch reads RILILDFGSQ…VLGICGCEAL (199 aa). The active-site Nucleophile is C86. Catalysis depends on residues H181 and E183. The region spanning 208–400 is the GMPS ATP-PPase domain; the sequence is WTSATIIEDA…LGLPYDMLYR (193 aa). ATP is bound at residue 235–241; sequence SGGVDSS.

Homodimer.

The catalysed reaction is XMP + L-glutamine + ATP + H2O = GMP + L-glutamate + AMP + diphosphate + 2 H(+). Its pathway is purine metabolism; GMP biosynthesis; GMP from XMP (L-Gln route): step 1/1. Its function is as follows. Catalyzes the synthesis of GMP from XMP. This chain is GMP synthase [glutamine-hydrolyzing], found in Yersinia pestis bv. Antiqua (strain Antiqua).